The following is a 341-amino-acid chain: MSLMVVSMVCVGFFLLQGAWPHEGVHRKPSLLAHPGPLVKSEETVILQCWSDVRFQHFLLHREGKFKDTLHLIGEHHDGVSKANFSIGPMMQDLAGTYRCYGSVTHSPYQLSAPSDPLDIVITGLYEKPSLSAQPGPTVLAGESVTLSCSSRSSYDMYHLSREGEAHERRFSAGPKVNGTFQADFPLGPATHGGTYRCFGSFRDSPYEWSNSSDPLLVSVTGNPSNSWPSPTEPSSETGNPRHLHVLIGTSVVIILFILLLFFLLHRWCCNKKNAVVMDQEPAGNRTVNREDSDEQDPQEVTYAQLNHCVFTQRKITRPSQRPKTPPTDIIVYTELPNAEP.

Positions 1 to 21 (MSLMVVSMVCVGFFLLQGAWP) are cleaved as a signal peptide. Residues 22 to 245 (HEGVHRKPSL…SETGNPRHLH (224 aa)) are Extracellular-facing. Ig-like C2-type domains are found at residues 42-107 (EETV…VTHS) and 142-205 (GESV…FRDS). Cystine bridges form between Cys-49/Cys-100 and Cys-149/Cys-198. 3 N-linked (GlcNAc...) asparagine glycosylation sites follow: Asn-84, Asn-178, and Asn-211. The segment at 220–239 (VTGNPSNSWPSPTEPSSETG) is disordered. The span at 223 to 239 (NPSNSWPSPTEPSSETG) shows a compositional bias: low complexity. A helical transmembrane segment spans residues 246 to 265 (VLIGTSVVIILFILLLFFLL). Residues 266-341 (HRWCCNKKNA…VYTELPNAEP (76 aa)) lie on the Cytoplasmic side of the membrane.

The protein belongs to the immunoglobulin superfamily. In terms of assembly, interacts with ARRB2.

The protein localises to the cell membrane. Receptor on natural killer (NK) cells for HLA-C alleles (HLA-Cw1, HLA-Cw3 and HLA-Cw7). Inhibits the activity of NK cells thus preventing cell lysis. This chain is Killer cell immunoglobulin-like receptor 2DL3, found in Homo sapiens (Human).